The chain runs to 573 residues: DEAD-box ATP-dependent RNA helicase 47B (573 aa).

The Q motif signature appears at 131 to 159; sequence KSFEELGLPPLLIDRLNKEGLSTPTEVQS. Residues 162 to 362 form the Helicase ATP-binding domain; that stretch reads IPIISQKHDA…RSWGHDPVLV (201 aa). Residue 175 to 182 participates in ATP binding; that stretch reads SYTGSGKT. A DEAD box motif is present at residues 293–296; that stretch reads DEVD. The region spanning 421 to 565 is the Helicase C-terminal domain; that stretch reads TLRRCIHALE…PCEFTEGKLL (145 aa).

It belongs to the DEAD box helicase family.

It carries out the reaction ATP + H2O = ADP + phosphate + H(+). The sequence is that of DEAD-box ATP-dependent RNA helicase 47B from Oryza sativa subsp. japonica (Rice).